Consider the following 393-residue polypeptide: HORMA domain-containing protein 1 (393 aa).

Residues 24–226 (QQSLVLVKRL…TPFHTFKVKV (203 aa)) enclose the HORMA domain. The segment at 322-393 (SKTSELDVSE…RKFSEPKERI (72 aa)) is disordered. Residues 352–361 (KSKENRKRTQ) show a composition bias toward basic and acidic residues. S375 carries the phosphoserine modification. A Nuclear localization signal motif is present at residues 382–385 (KRRK).

As to quaternary structure, interacts with HORMAD2. Interacts with IHO1. Post-translationally, phosphorylated at Ser-376 in a SPO11-dependent manner.

The protein resides in the nucleus. It is found in the chromosome. Functionally, plays a key role in meiotic progression. Regulates 3 different functions during meiosis: ensures that sufficient numbers of processed DNA double-strand breaks (DSBs) are available for successful homology search by increasing the steady-state numbers of single-stranded DSB ends. Promotes synaptonemal-complex formation independently of its role in homology search. Plays a key role in the male mid-pachytene checkpoint and the female meiotic prophase checkpoint: required for efficient build-up of ATR activity on unsynapsed chromosome regions, a process believed to form the basis of meiotic silencing of unsynapsed chromatin (MSUC) and meiotic prophase quality control in both sexes. This is HORMA domain-containing protein 1 (HORMAD1) from Bos taurus (Bovine).